A 179-amino-acid polypeptide reads, in one-letter code: Small ribosomal subunit protein uS5 (179 aa).

One can recognise an S5 DRBM domain in the interval 22–85 (MIEKLVAVNR…EYARKRMANV (64 aa)).

It belongs to the universal ribosomal protein uS5 family. Part of the 30S ribosomal subunit. Contacts proteins S4 and S8.

Its function is as follows. With S4 and S12 plays an important role in translational accuracy. Located at the back of the 30S subunit body where it stabilizes the conformation of the head with respect to the body. The protein is Small ribosomal subunit protein uS5 of Xylella fastidiosa (strain M12).